A 236-amino-acid polypeptide reads, in one-letter code: Eukaryotic translation initiation factor 3 subunit J (236 aa).

The segment at 1–84 (MADDWESAAD…LREEEAEAER (84 aa)) is disordered. The segment covering 28–46 (GEDEDEDIKDSWEDEEEKK) has biased composition (acidic residues). Composition is skewed to basic and acidic residues over residues 47-58 (DEEKPTKTEAPA) and 68-77 (AKLEQQALRE).

It belongs to the eIF-3 subunit J family. Component of the eukaryotic translation initiation factor 3 (eIF-3) complex. The eIF-3 complex interacts with pix.

The protein localises to the cytoplasm. Component of the eukaryotic translation initiation factor 3 (eIF-3) complex, which is involved in protein synthesis of a specialized repertoire of mRNAs and, together with other initiation factors, stimulates binding of mRNA and methionyl-tRNAi to the 40S ribosome. The eIF-3 complex specifically targets and initiates translation of a subset of mRNAs involved in cell proliferation. The sequence is that of Eukaryotic translation initiation factor 3 subunit J from Drosophila sechellia (Fruit fly).